The following is a 37-amino-acid chain: Peptide encoded by miPEP164a (37 aa).

Regulatory peptide encoded by the primary transcript (pri-miR164a) of the microRNA miR164a that enhances the accumulation of its corresponding mature miRNA. Acts probably as a transcriptional activator of its corresponding pri-miRNA. This chain is Peptide encoded by miPEP164a, found in Arabidopsis thaliana (Mouse-ear cress).